Here is a 421-residue protein sequence, read N- to C-terminus: Acetylglutamate kinase (421 aa).

The tract at residues 1 to 252 is acetylglutamate kinase; that stretch reads MASAKEISQY…PLESSVSITR (252 aa). Substrate contacts are provided by residues 59-60, Arg-81, and Asn-170; that span reads AG. The 147-residue stretch at 274 to 420 folds into the N-acetyltransferase domain; the sequence is ERVIRATTWK…HCTQHPPTLI (147 aa).

It in the N-terminal section; belongs to the acetylglutamate kinase family. ArgB subfamily.

Its subcellular location is the cytoplasm. The catalysed reaction is N-acetyl-L-glutamate + ATP = N-acetyl-L-glutamyl 5-phosphate + ADP. The protein operates within amino-acid biosynthesis; L-arginine biosynthesis; N(2)-acetyl-L-ornithine from L-glutamate: step 2/4. The chain is Acetylglutamate kinase (argB) from Xylella fastidiosa (strain Temecula1 / ATCC 700964).